The following is a 92-amino-acid chain: Serine protease inhibitor I/II (92 aa).

The signal sequence occupies residues M1–A19. Pacifastin domains lie at E20–H54 and E57–K92. 6 disulfide bridges follow: C23–C38, C33–C51, C36–C46, C60–C75, C70–C89, and C73–C84.

Belongs to the protease inhibitor I19 family. In terms of tissue distribution, expressed in hemolymph, ovaries, testes and fat body of adults but are absent in the gut. Also present in larval hemolymph and fat body.

Its subcellular location is the secreted. In terms of biological role, in vitro, is active against alpha-chymotrypsin and trypsin. Functionally, in vitro, is active against alpha-chymotrypsin and pancreatic elastase. In Schistocerca gregaria (Desert locust), this protein is Serine protease inhibitor I/II.